The primary structure comprises 442 residues: MNCDRICELPDSLLTQVLSYLPTIDSVKTSVLSKRWEFLWLRVPVLDLKVSDFPDENYASFIDNFLEFNRKSRMRKFKLKYDEYTYDDDRLAGWVVTTVDRGIQHLDAKGFETNMCVREFMPQNIYKCNTLVSLMLVTVGIENPEFVVSLPSLKIMHLEDVWYYDDPLIMEKIISGCPVLEDFVLIRPIDFCNLDVLQFLRVRSLSLRSFRLTFEYSVSCTYFSVEIDAPRLEYLNFNDDQSDTIVVKNMTSLSMIDIDSEFNVKFGGSRLEPGDLRKRDIIRDFLTAISCVRHMIISRRTLEVLDRYSKLVPIPKFDNLYRLQAAVSRSMLQLLLVFLESCPNLENLILDFTVSTEPEQDGLTYVPQCLLSSLECVEIRELIMGEETGEKLVRYFLKNSVVLKKLILRLEDSSIANQDSDIFKELSTFTKRSRSCEVIIIH.

The F-box domain occupies 3-49; it reads CDRICELPDSLLTQVLSYLPTIDSVKTSVLSKRWEFLWLRVPVLDLK. LRR repeat units follow at residues 128-160, 162-187, 188-214, 234-260, 278-309, and 324-352; these read CNTL…HLED, WYYD…VLIR, PIDF…RLTF, YLNF…DIDS, KRDI…DRYS, and QAAV…ILDF. Positions 358–410 constitute an FBD domain; sequence PEQDGLTYVPQCLLSSLECVEIRELIMGEETGEKLVRYFLKNSVVLKKLILRL.

This is F-box/FBD/LRR-repeat protein At2g26030 from Arabidopsis thaliana (Mouse-ear cress).